We begin with the raw amino-acid sequence, 272 residues long: Acidic leucine-rich nuclear phosphoprotein 32 family member B (272 aa).

LRR repeat units follow at residues 18-38 (AVRELVLDNCKAMDGKIEGLT), 43-64 (NLEFLSLISVGLFSVSDLPKLP), 65-87 (KLKKLELSENRIFGGLDRLAEEL), and 89-110 (SLTHLNLSGNNLKDISTLEPLK). Residues 123–161 (CEVTNRSDYRETVFRLLPQLSYLDGYDREDQEAPDSDVE) enclose the LRRCT domain. Positions 149–254 (DREDQEAPDS…DEDEDEEEEE (106 aa)) are enriched in acidic residues. The interval 149–272 (DREDQEAPDS…RETDDEGEDD (124 aa)) is disordered. Residues serine 164 and serine 171 each carry the phosphoserine modification. The segment covering 255–265 (SGKGEKRKRET) has biased composition (basic and acidic residues). The Nuclear localization signal motif lies at 260-263 (KRKR). Phosphothreonine is present on threonine 265.

Belongs to the ANP32 family. In terms of assembly, interacts with histones H3 and H4. Interacts with KLF5; this interaction induces promoter region-specific histone incorporation and inhibition of histone acetylation by ANP32B. Some glutamate residues are glycylated by TTLL8. This modification occurs exclusively on glutamate residues and results in a glycine chain on the gamma-carboxyl group. In terms of processing, directly cleaved by caspase-3/CASP3.

The protein localises to the nucleus. Multifunctional protein that is involved in the regulation of many processes including cell proliferation, apoptosis, cell cycle progression or transcription. Regulates the proliferation of neuronal stem cells, differentiation of leukemic cells and progression from G1 to S phase of the cell cycle. As negative regulator of caspase-3-dependent apoptosis, may act as an antagonist of ANP32A in regulating tissue homeostasis. Exhibits histone chaperone properties, able to recruit histones to certain promoters, thus regulating the transcription of specific genes. Also plays an essential role in the nucleocytoplasmic transport of specific mRNAs via the uncommon nuclear mRNA export receptor XPO1/CRM1. Participates in the regulation of adequate adaptive immune responses by acting on mRNA expression and cell proliferation. The polypeptide is Acidic leucine-rich nuclear phosphoprotein 32 family member B (Anp32b) (Mus musculus (Mouse)).